We begin with the raw amino-acid sequence, 482 residues long: Nuclear transcription factor Y subunit nfya-1 (482 aa).

Residues 1–160 (MNGASRGDVQ…NGSYIQYNEP (160 aa)) form a disordered region. The segment covering 72–93 (SSPNVQTQCHQPPVVRSQTHQA) has biased composition (polar residues). Over residues 94-110 (SVSQTTPTQTTPSQYTP) the composition is skewed to low complexity. Composition is skewed to polar residues over residues 126-135 (HVTPSQQQRI) and 144-160 (VSQS…YNEP). The Subunit association domain (SAD) signature appears at 306 to 329 (LVNPKQFNRIMRRREMRQQLEASG). The NFYA/HAP2-type DNA-binding region spans 336–361 (QKYLHESRHLHALKRKRGLDGRFDNT). A disordered region spans residues 344 to 414 (HLHALKRKRG…QPKGGIVNSS (71 aa)). Residues 353 to 362 (GLDGRFDNTK) show a composition bias toward basic and acidic residues. Positions 363 to 375 (TAESSSMVSSTTS) are enriched in low complexity.

Belongs to the NFYA/HAP2 subunit family. Forms a heterotrimeric transcription factor complex (nfya-1-NF-Y complex) composed of nfya-1, nfyb-1 and nfyc-1, which binds to 5'-CCAAT-3' box motif in the promoters of its target genes. Interacts with the nfyb-1 and nfyc-1 dimer; the interaction is required for subsequent binding to the 5'-CCAAT-3' box motif in DNA. Does not interact with either nfyb-1 or nfyc-1 in their monomeric form. Interacts with mes-3. As to expression, expressed in certain parts of the gonads with high expression in fertilized oocytes in the uterus and mature oocytes from the distal to the proximal arm of the gonad, but weak expression in the syncytial ovaries and immature oocytes at the beginning of the proximal arm of the gonad. Highly expressed in the head ganglia neurons and the developing hermaphrodite vulva and male tail. Weakly expressed in most somatic cells. Not expressed in the intestine, the hypodermis, body wall muscle surrounding the pseudocoelomic space, secretory cells in the pharyngeal terminal bulb wall, in the small ganglia surrounding the pharynx and in the neurons running anteriorly to the sensory organs in the head.

Its subcellular location is the nucleus. In terms of biological role, component of the sequence-specific heterotrimeric transcription factor (nfya-1-NF-Y) which specifically recognizes a 5'-CCAAT-3' box motif found in the promoters of its target genes to regulate their expression and control cellular identity in particular tissue types. In association with the components in the nfya-1-NF-Y complex, represses the expression of the T-box transcription factor tbx-2 throughout larval development, which most likely restricts its expression to certain tissues. May act to repress txb-2 expression in conjunction with tbx-2 itself, which has an autoregulatory role. With the components in this complex, negatively regulates the expression of the homeobox protein egl-5 to spatially restrict its expression in tissues such as the head. May regulate egl-5 expression in association with the mes-2-mes-3-mes-6 complex. The chain is Nuclear transcription factor Y subunit nfya-1 from Caenorhabditis elegans.